The chain runs to 90 residues: Small ribosomal subunit protein uS15 (90 aa).

This sequence belongs to the universal ribosomal protein uS15 family. Part of the 30S ribosomal subunit. Forms a bridge to the 50S subunit in the 70S ribosome, contacting the 23S rRNA.

In terms of biological role, one of the primary rRNA binding proteins, it binds directly to 16S rRNA where it helps nucleate assembly of the platform of the 30S subunit by binding and bridging several RNA helices of the 16S rRNA. Functionally, forms an intersubunit bridge (bridge B4) with the 23S rRNA of the 50S subunit in the ribosome. The chain is Small ribosomal subunit protein uS15 from Wolbachia sp. subsp. Drosophila simulans (strain wRi).